We begin with the raw amino-acid sequence, 78 residues long: U-scoloptoxin(15)-Ssm2a (78 aa).

Positions 1–23 (MEKKIIFLCFFVSLLTLPEFISS) are cleaved as a signal peptide. Positions 34-37 (PEKK) are important for inhibition of KCNQ4. 2 cysteine pairs are disulfide-bonded: cysteine 44/cysteine 70 and cysteine 48/cysteine 72.

This sequence belongs to the SLPTX(15) family. In terms of tissue distribution, expressed by the venom gland.

The protein resides in the secreted. The protein is U-scoloptoxin(15)-Ssm2a of Scolopendra mutilans (Chinese red-headed centipede).